The primary structure comprises 223 residues: Uracil-DNA glycosylase (223 aa).

The active-site Proton acceptor is the Asp-64.

The protein belongs to the uracil-DNA glycosylase (UDG) superfamily. UNG family.

The protein localises to the cytoplasm. The catalysed reaction is Hydrolyzes single-stranded DNA or mismatched double-stranded DNA and polynucleotides, releasing free uracil.. Excises uracil residues from the DNA which can arise as a result of misincorporation of dUMP residues by DNA polymerase or due to deamination of cytosine. The protein is Uracil-DNA glycosylase of Desulfitobacterium hafniense (strain DSM 10664 / DCB-2).